Here is an 85-residue protein sequence, read N- to C-terminus: Putative membrane protein insertion efficiency factor (85 aa).

The segment at 66–85 is disordered; that stretch reads PLNSGGDDPVPPKLDDNREH.

It belongs to the UPF0161 family.

Its subcellular location is the cell inner membrane. Functionally, could be involved in insertion of integral membrane proteins into the membrane. In Yersinia pestis bv. Antiqua (strain Antiqua), this protein is Putative membrane protein insertion efficiency factor.